A 632-amino-acid polypeptide reads, in one-letter code: POU domain, class 2, transcription factor 1 (632 aa).

Residues Thr157 and Thr163 each carry the phosphothreonine modification. The region spanning 167–241 (EEPSDLEELE…LLEKWLNDAE (75 aa)) is the POU-specific domain. Ser170 is modified (phosphoserine). Low complexity predominate over residues 243–258 (LSSDSTASSPSALNSP). The interval 243–273 (LSSDSTASSPSALNSPGLGAEGLNRRRKKRT) is disordered. The homeobox DNA-binding region spans 268–327 (RRKKRTSIETNIRVALEKSFMENQKPTSEDITLIAEQLNMEKEVIRVWFCNRRQKEKRIN). Phosphoserine occurs at positions 274 and 337. The segment at 385–448 (GTTDSTSNNT…STPLPSPLGA (64 aa)) is disordered. Low complexity predominate over residues 394–441 (TATVISTAPPASSAVTSPSLSPSPSASASTSEASSASETSTTQTTSTP).

Belongs to the POU transcription factor family. Class-2 subfamily. Interacts with POU2AF1; the interaction increases POU2F1 transactivation activity. Interacts with NR3C1, AR, PGR and HCFC1. Phosphorylated by PRKDC. As to expression, widely expressed.

Its subcellular location is the nucleus. Transcription factor that binds to the octamer motif (5'-ATTTGCAT-3') and activates the promoters of the genes for some small nuclear RNAs (snRNA) and of genes such as those for histone H2B and immunoglobulins. Modulates transcription transactivation by NR3C1, AR and PGR. The polypeptide is POU domain, class 2, transcription factor 1 (Pou2f1) (Rattus norvegicus (Rat)).